Consider the following 512-residue polypeptide: 23S rRNA (uracil(1939)-C(5))-methyltransferase RlmD (512 aa).

Low complexity predominate over residues 1-14 (MQPTDSKTSTSDTT). Positions 1 to 45 (MQPTDSKTSTSDTTEQPNETQTITIPPSKKKSKPSSKTRRRLKDA) are disordered. Over residues 15–25 (EQPNETQTITI) the composition is skewed to polar residues. Over residues 28–42 (SKKKSKPSSKTRRRL) the composition is skewed to basic residues. Residues 41 to 113 (RLKDAEPLPF…TSFEEGDAVN (73 aa)) form the TRAM domain. [4Fe-4S] cluster is bound by residues Cys-127, Cys-133, Cys-136, and Cys-215. Residues Gln-340, Phe-369, Asn-374, Glu-393, Asp-420, and Asp-441 each contribute to the S-adenosyl-L-methionine site. Cys-467 serves as the catalytic Nucleophile.

It belongs to the class I-like SAM-binding methyltransferase superfamily. RNA M5U methyltransferase family. RlmD subfamily.

The catalysed reaction is uridine(1939) in 23S rRNA + S-adenosyl-L-methionine = 5-methyluridine(1939) in 23S rRNA + S-adenosyl-L-homocysteine + H(+). Functionally, catalyzes the formation of 5-methyl-uridine at position 1939 (m5U1939) in 23S rRNA. The protein is 23S rRNA (uracil(1939)-C(5))-methyltransferase RlmD of Psychrobacter arcticus (strain DSM 17307 / VKM B-2377 / 273-4).